Reading from the N-terminus, the 554-residue chain is Formate--tetrahydrofolate ligase (554 aa).

65-72 contributes to the ATP binding site; sequence TPAGEGKT.

This sequence belongs to the formate--tetrahydrofolate ligase family.

It carries out the reaction (6S)-5,6,7,8-tetrahydrofolate + formate + ATP = (6R)-10-formyltetrahydrofolate + ADP + phosphate. Its pathway is one-carbon metabolism; tetrahydrofolate interconversion. The chain is Formate--tetrahydrofolate ligase from Petrotoga mobilis (strain DSM 10674 / SJ95).